A 374-amino-acid polypeptide reads, in one-letter code: UPF0496 protein At4g34320 (374 aa).

A run of 2 helical transmembrane segments spans residues 215-235 (IIFVATFATVLICSVVAAAMA) and 238-258 (PVAAALAAATAVPLGSMGKWI).

Belongs to the UPF0496 family.

It is found in the membrane. The sequence is that of UPF0496 protein At4g34320 from Arabidopsis thaliana (Mouse-ear cress).